The chain runs to 90 residues: RING finger protein Z (90 aa).

A lipid anchor (N-myristoyl glycine; by host) is attached at Gly-2. An RING-type; atypical zinc finger spans residues 32–68; that stretch reads CKSCWQKFDSLVRCHDHYLCRHCLNLLLSVSDRCPLC. The PPXY motif signature appears at 85–88; that stretch reads PPPY.

This sequence belongs to the arenaviridae Z protein family. In terms of assembly, interacts with protein NP; this interaction probably directs the encapsidated genome to budding sites. Interacts (via RING-type zinc finger) with polymerase L; this interaction inhibits viral transcription and replication, Z partially blocks the product exit tunnel for the releasing nascent RNA product. Interacts with the glycoprotein complex; this interaction plays a role in virion budding. Interacts (via RING-type zinc finger) with host EIF4E; this interaction results in conformational changes of both interacting proteins and reduces EIF4E affinity for its substrate, the 5'-m7 G cap structure. Interacts (via late-budding domain) with host TSG101; this interaction is essential for budding and release of viral particles. Interacts with host RPLP0; this interaction may serve to load ribosome-like particles inside the virion. Interacts with host PML; this interaction induces PML bodies redistribution in the cytoplasm upon viral infection. Myristoylation is required for the role of RING finger protein Z in assembly and budding.

The protein resides in the virion. The protein localises to the host cytoplasm. Its subcellular location is the host perinuclear region. It localises to the host cell membrane. Functionally, plays a crucial role in virion assembly and budding. Expressed late in the virus life cycle, it acts as an inhibitor of viral transcription and RNA synthesis by interacting with the viral polymerase L. Presumably recruits the NP encapsidated genome to cellular membranes at budding sites via direct interaction with NP. Plays critical roles in the final steps of viral release by interacting with host TSG101, a member of the vacuolar protein-sorting pathway and using other cellular host proteins involved in vesicle formation pathway. The budding of the virus progeny occurs after association of protein Z with the viral glycoprotein complex SSP-GP1-GP2 at the cell periphery, step that requires myristoylation of protein Z. Also selectively represses protein production by associating with host EIF4E. In cell-based minigenome assay, has an inhibitory effect on the ribonucleoprotein machinery (vRNP), which is responsible for the replication and transcription of the viral genome. The sequence is that of RING finger protein Z from Homo sapiens (Human).